Reading from the N-terminus, the 164-residue chain is 17.8 kDa class II heat shock protein (164 aa).

Residues 48–164 (DARAMAATPA…KPKTIEVKVA (117 aa)) enclose the sHSP domain.

Belongs to the small heat shock protein (HSP20) family.

It localises to the cytoplasm. The sequence is that of 17.8 kDa class II heat shock protein from Zea mays (Maize).